The primary structure comprises 29 residues: Ranatuerin-2SEa (29 aa).

An intrachain disulfide couples C23 to C29.

In terms of tissue distribution, expressed by the skin glands.

The protein localises to the secreted. Mast cell degranulating peptide. Causes histamine release from rat peritoneal mast cells in vitro. Has antibacterial activity against the Gram-negative bacterium E.coli K12 and Gram-positive bacterium M.luteus NCT C2665. The protein is Ranatuerin-2SEa of Lithobates sevosus (Dusky gopher frog).